We begin with the raw amino-acid sequence, 436 residues long: 5-hydroxytryptamine receptor 6 (436 aa).

The Extracellular portion of the chain corresponds to 1 to 27 (MVPEPGPVNSSTPAWGPGPPPAPGGSG). N9 is a glycosylation site (N-linked (GlcNAc...) asparagine). A helical transmembrane segment spans residues 28–52 (WVAAALCVVIVLTAAANSLLIVLIC). Residues 53–62 (TQPALRNTSN) are Cytoplasmic-facing. The chain crosses the membrane as a helical span at residues 63–88 (FFLVSLFTSDLMVGLVVMPPAMLNAL). Over 89–96 (YGRWVLAR) the chain is Extracellular. The helical transmembrane segment at 97–122 (GLCLLWTAFDVMCCSASILNLCLISL) threads the bilayer. C99 and C180 are oxidised to a cystine. D106 contacts serotonin. At 123–142 (DRYLLILSPLRYKLRMTAPR) the chain is on the cytoplasmic side. The helical transmembrane segment at 143–167 (ALALILGAWSLAALASFLPLLLGWH) threads the bilayer. Residues 168–185 (ELGKARTPAPGQCRLLAS) lie on the Extracellular side of the membrane. Residues 186 to 209 (LPFVLVASGVTFFLPSGAICFTYC) traverse the membrane as a helical segment. Residues 210-266 (RILLAARKQAVQVASLTTGTAGQALETLQVPRTPRPGMESADSRRLATKHSRKALKA) lie on the Cytoplasmic side of the membrane. Residues 267-293 (SLTLGILLGMFFVTWLPFFVANIAQAV) traverse the membrane as a helical segment. Position 288 (N288) interacts with serotonin. The Extracellular segment spans residues 294–299 (CDCISP). A helical membrane pass occupies residues 300–323 (GLFDVLTWLGYCNSTMNPIIYPLF). The Cytoplasmic segment spans residues 324–436 (MRDFKRALGR…RYGRIHSVPP (113 aa)).

Belongs to the G-protein coupled receptor 1 family. As to quaternary structure, interacts with MTOR, RPTOR and NF1. Interacts with CDK5. In terms of tissue distribution, localized exclusively in the central nervous system, predominantly in the corpus striatum but also in various limbic and cortical regions.

It is found in the cell membrane. Functionally, G-protein coupled receptor for 5-hydroxytryptamine (serotonin), a biogenic hormone that functions as a neurotransmitter, a hormone and a mitogen. Also has a high affinity for tricyclic psychotropic drugs. Ligand binding causes a conformation change that triggers signaling via guanine nucleotide-binding proteins (G proteins) and modulates the activity of downstream effectors. HTR6 is coupled to G(s) G alpha proteins and mediates activation of adenylate cyclase activity. Controls pyramidal neurons migration during corticogenesis, through the regulation of CDK5 activity. Is an activator of mTOR signaling. This chain is 5-hydroxytryptamine receptor 6 (Htr6), found in Rattus norvegicus (Rat).